We begin with the raw amino-acid sequence, 430 residues long: tRNA(Ile)-lysidine synthase (430 aa).

21–26 (SGGLDS) is an ATP binding site.

Belongs to the tRNA(Ile)-lysidine synthase family.

It is found in the cytoplasm. It carries out the reaction cytidine(34) in tRNA(Ile2) + L-lysine + ATP = lysidine(34) in tRNA(Ile2) + AMP + diphosphate + H(+). Ligates lysine onto the cytidine present at position 34 of the AUA codon-specific tRNA(Ile) that contains the anticodon CAU, in an ATP-dependent manner. Cytidine is converted to lysidine, thus changing the amino acid specificity of the tRNA from methionine to isoleucine. This chain is tRNA(Ile)-lysidine synthase, found in Salmonella paratyphi A (strain ATCC 9150 / SARB42).